We begin with the raw amino-acid sequence, 130 residues long: Small ribosomal subunit protein uS9 (130 aa).

The protein belongs to the universal ribosomal protein uS9 family.

The protein is Small ribosomal subunit protein uS9 of Pseudomonas aeruginosa (strain LESB58).